Consider the following 408-residue polypeptide: MRFKLADSLSLITVQLILATSTLALSNPGSSSQKHSPNPSAPSPKGISVPFFATLERLSRLVDIAYCIGTTGVRKPFNCVSRCNDFPSLSLINAWNTGPLLSDSCGYIAVDHGVAQHGDSGDLTAGEPAIVVAFRGTYSIANTIVDLSTVPQEYVPYPSPDHGGSEPPNEPEHTCTNCTVHMGFLQSWKNTRQFVLPQLRQLRLQYPSYPIQLVGHSLGGSVACLAALELKVSLGWENVIVTTFGEPRVGNEGLARFVDEVFYLNDDNNPEGREFRRVTHKEDPVPLLPLSEWGYKSHAGEVYITKQELTPSESDIYMCIGDNDPKCIAGADDSLWMTTRRLFHARNLWTASDKLAEPNGFPSRFKLWQLLFAHRDYFWRLGLCVPGGDPADWGRGRYQGLGPDTEEL.

The first 24 residues, 1-24, serve as a signal peptide directing secretion; the sequence is MRFKLADSLSLITVQLILATSTLA. Asn177 carries an N-linked (GlcNAc...) asparagine glycan. Catalysis depends on Ser217, which acts as the Nucleophile. Active-site residues include Asp283 and His374.

Belongs to the AB hydrolase superfamily. Lipase family. Class 3 subfamily.

The protein resides in the secreted. The catalysed reaction is a monoacylglycerol + H2O = glycerol + a fatty acid + H(+). It catalyses the reaction a diacylglycerol + H2O = a monoacylglycerol + a fatty acid + H(+). In terms of biological role, secreted mono- and diacylglycerol lipase involved in plant virulence. Has a substrate preference for p-nitrophenyl esters with a carbon chain length of C10 (p-nitrophenyl caprate). This Gibberella zeae (strain ATCC MYA-4620 / CBS 123657 / FGSC 9075 / NRRL 31084 / PH-1) (Wheat head blight fungus) protein is Secreted mono- and diacylglycerol lipase 2.